Reading from the N-terminus, the 319-residue chain is uncharacterized protein (319 aa).

9 consecutive transmembrane segments (helical) span residues 11–31, 43–63, 83–103, 108–128, 134–154, 195–215, 220–240, 260–280, and 284–304; these read GLWA…LGVF, ALGW…GVWW, LSVD…IPAL, VLFW…FAGV, FHWL…KLFL, LATP…LFAL, AIFA…FAIL, KVGL…IDFV, and PEVS…ASLI.

It belongs to the TerC family.

Its subcellular location is the cell membrane. This is an uncharacterized protein from Myxococcus xanthus.